Reading from the N-terminus, the 130-residue chain is Small ribosomal subunit protein uS9 (130 aa).

Positions 99–110 (KKAGFLTRDPRM) are enriched in basic and acidic residues. Residues 99–130 (KKAGFLTRDPRMKERKKYGLKKARRAPQFSKR) form a disordered region. Residues 111–130 (KERKKYGLKKARRAPQFSKR) show a composition bias toward basic residues.

This sequence belongs to the universal ribosomal protein uS9 family.

The sequence is that of Small ribosomal subunit protein uS9 from Clostridium botulinum (strain Alaska E43 / Type E3).